The chain runs to 115 residues: Ribonuclease P protein component (115 aa).

It belongs to the RnpA family. In terms of assembly, consists of a catalytic RNA component (M1 or rnpB) and a protein subunit.

The enzyme catalyses Endonucleolytic cleavage of RNA, removing 5'-extranucleotides from tRNA precursor.. Functionally, RNaseP catalyzes the removal of the 5'-leader sequence from pre-tRNA to produce the mature 5'-terminus. It can also cleave other RNA substrates such as 4.5S RNA. The protein component plays an auxiliary but essential role in vivo by binding to the 5'-leader sequence and broadening the substrate specificity of the ribozyme. In Staphylococcus carnosus (strain TM300), this protein is Ribonuclease P protein component.